Here is an 85-residue protein sequence, read N- to C-terminus: Small ribosomal subunit protein bS16 (85 aa).

This sequence belongs to the bacterial ribosomal protein bS16 family.

The sequence is that of Small ribosomal subunit protein bS16 from Pseudomonas savastanoi pv. phaseolicola (strain 1448A / Race 6) (Pseudomonas syringae pv. phaseolicola (strain 1448A / Race 6)).